Consider the following 428-residue polypeptide: MLPLYRFPQEASALQERLVRHVSFDEAAHKAVDEILAKVRQQGDRAVLNYTEQFQGVRLTSMQVDEEAIEMAYRHADPSLIATLHEAYANIVRFHEHEVERSFFYEAEGGVLLGQRVRPMERAMLYVPGGKAAYPSSLLMNAAPAKVAGVCEIAVTTPCDATGVVNPTILAAAKVAGISSIYKIGGAQAVAAFAYGTESIPKVDIITGPGNKYVALAKKQVFGHVAIDSIAGPSEVVIIADESAHAEFVALDMFAQAEHDPDASAVLITTSESFAQAVQQAVASLLPTMLRHETIASSLLHNGAMVLVPSLDDACAVSDMLAPEHLELHVVQPWDILPKLKHAGAIFMGSYSCETIGDYFAGPNHTLPTSGTARFFSPLSVRDFVKHTSIISYSPEQLRSKGAQIAAFADAEGLQAHAEAVRVRLKTL.

NAD(+) contacts are provided by Y126, Q188, and N211. S234, Q256, and H259 together coordinate substrate. Residues Q256 and H259 each contribute to the Zn(2+) site. Catalysis depends on proton acceptor residues E324 and H325. Substrate is bound by residues H325, D358, E412, and H417. D358 lines the Zn(2+) pocket. Position 417 (H417) interacts with Zn(2+).

The protein belongs to the histidinol dehydrogenase family. It depends on Zn(2+) as a cofactor.

It carries out the reaction L-histidinol + 2 NAD(+) + H2O = L-histidine + 2 NADH + 3 H(+). The protein operates within amino-acid biosynthesis; L-histidine biosynthesis; L-histidine from 5-phospho-alpha-D-ribose 1-diphosphate: step 9/9. In terms of biological role, catalyzes the sequential NAD-dependent oxidations of L-histidinol to L-histidinaldehyde and then to L-histidine. The sequence is that of Histidinol dehydrogenase from Chlorobium chlorochromatii (strain CaD3).